Consider the following 253-residue polypeptide: Major prion protein (253 aa).

An N-terminal signal peptide occupies residues 1 to 22 (MANLGCWMLVLFVATWSDLGLC). Positions 23–38 (KKRPKPGGWNTGGSRY) are interaction with ADGRG6. Residues 23–230 (KKRPKPGGWN…ESQAYYQRGS (208 aa)) are interaction with GRB2, ERI3 and SYN1. Positions 26-108 (PKPGGWNTGG…WNKPSKPKTN (83 aa)) are disordered. A run of 5 repeats spans residues 51–59 (PQGGGGWGQ), 60–67 (PHGGGWGQ), 68–75 (PHGGGWGQ), 76–83 (PHGGGWGQ), and 84–91 (PHGGGWGQ). The interval 51–91 (PQGGGGWGQPHGGGWGQPHGGGWGQPHGGGWGQPHGGGWGQ) is 5 X 8 AA tandem repeats of P-H-G-G-G-W-G-Q. The span at 52–95 (QGGGGWGQPHGGGWGQPHGGGWGQPHGGGWGQPHGGGWGQGGGT) shows a compositional bias: gly residues. Residues His-61, Gly-62, Gly-63, His-69, Gly-70, Gly-71, His-77, Gly-78, Gly-79, His-85, Gly-86, and Gly-87 each coordinate Cu(2+). A disulfide bridge links Cys-179 with Cys-214. N-linked (GlcNAc...) asparagine glycosylation is found at Asn-181 and Asn-197. Ser-230 is lipidated: GPI-anchor amidated serine. The propeptide at 231 to 253 (SMVLFSSPPVILLISFLIFLIVG) is removed in mature form.

The protein belongs to the prion family. As to quaternary structure, monomer and homodimer. Has a tendency to aggregate into amyloid fibrils containing a cross-beta spine, formed by a steric zipper of superposed beta-strands. Soluble oligomers may represent an intermediate stage on the path to fibril formation. Copper binding may promote oligomerization. Interacts with GRB2, APP, ERI3/PRNPIP and SYN1. Mislocalized cytosolically exposed PrP interacts with MGRN1; this interaction alters MGRN1 subcellular location and causes lysosomal enlargement. Interacts with APP. Interacts with KIAA1191. Interacts with ADGRG6.

The protein localises to the cell membrane. It localises to the golgi apparatus. Its function is as follows. Its primary physiological function is unclear. May play a role in neuronal development and synaptic plasticity. May be required for neuronal myelin sheath maintenance. May promote myelin homeostasis through acting as an agonist for ADGRG6 receptor. May play a role in iron uptake and iron homeostasis. Soluble oligomers are toxic to cultured neuroblastoma cells and induce apoptosis (in vitro). Association with GPC1 (via its heparan sulfate chains) targets PRNP to lipid rafts. Also provides Cu(2+) or Zn(2+) for the ascorbate-mediated GPC1 deaminase degradation of its heparan sulfate side chains. The chain is Major prion protein (PRNP) from Gorilla gorilla gorilla (Western lowland gorilla).